Reading from the N-terminus, the 472-residue chain is ESX-3 secretion system protein EccD3 (472 aa).

11 helical membrane-spanning segments follow: residues 121–141, 155–175, 183–203, 211–231, 236–256, 258–278, 327–347, 349–369, 381–401, 405–425, and 450–470; these read WGIA…ALLA, LAGL…GLLI, GIAL…LAVP, VLLG…IPSA, VVAF…AAGA, LLWQ…ALLV, QSGF…AIAV, PEAL…AATL, AWLL…YTAT, VAAF…VVVA, and GLDV…AWVL.

The protein belongs to the EccD/Snm4 family. As to quaternary structure, part of the ESX-3 / type VII secretion system (T7SS), which is composed of cytosolic and membrane components. The ESX-3 membrane complex is composed of EccB3, EccC3, EccD3 and EccE3.

It is found in the cell inner membrane. Its function is as follows. Part of the ESX-3 specialized secretion system, which is important for iron and zinc uptake or homeostasis. The protein is ESX-3 secretion system protein EccD3 of Mycobacterium tuberculosis (strain CDC 1551 / Oshkosh).